A 407-amino-acid polypeptide reads, in one-letter code: CCA-adding enzyme (407 aa).

Positions 32 and 35 each coordinate ATP. CTP is bound by residues Gly32 and Arg35. Residues Asp45 and Asp47 each contribute to the Mg(2+) site. The ATP site is built by Arg116, Asp159, Arg162, Arg165, and Arg168. Residues Arg116, Asp159, Arg162, Arg165, and Arg168 each contribute to the CTP site.

The protein belongs to the tRNA nucleotidyltransferase/poly(A) polymerase family. Bacterial CCA-adding enzyme type 3 subfamily. Homodimer. Mg(2+) is required as a cofactor.

The catalysed reaction is a tRNA precursor + 2 CTP + ATP = a tRNA with a 3' CCA end + 3 diphosphate. The enzyme catalyses a tRNA with a 3' CCA end + 2 CTP + ATP = a tRNA with a 3' CCACCA end + 3 diphosphate. Functionally, catalyzes the addition and repair of the essential 3'-terminal CCA sequence in tRNAs without using a nucleic acid template. Adds these three nucleotides in the order of C, C, and A to the tRNA nucleotide-73, using CTP and ATP as substrates and producing inorganic pyrophosphate. tRNA 3'-terminal CCA addition is required both for tRNA processing and repair. Also involved in tRNA surveillance by mediating tandem CCA addition to generate a CCACCA at the 3' terminus of unstable tRNAs. While stable tRNAs receive only 3'-terminal CCA, unstable tRNAs are marked with CCACCA and rapidly degraded. The protein is CCA-adding enzyme of Lactiplantibacillus plantarum (strain ATCC BAA-793 / NCIMB 8826 / WCFS1) (Lactobacillus plantarum).